A 156-amino-acid chain; its full sequence is Small ribosomal subunit protein uS7 (156 aa).

The protein belongs to the universal ribosomal protein uS7 family. As to quaternary structure, part of the 30S ribosomal subunit. Contacts proteins S9 and S11.

In terms of biological role, one of the primary rRNA binding proteins, it binds directly to 16S rRNA where it nucleates assembly of the head domain of the 30S subunit. Is located at the subunit interface close to the decoding center, probably blocks exit of the E-site tRNA. The chain is Small ribosomal subunit protein uS7 from Parafrankia sp. (strain EAN1pec).